The primary structure comprises 92 residues: Small ribosomal subunit protein uS19 (92 aa).

The interval 73–92 (EFSPSRTYYGHAADKKAKRR) is disordered.

Belongs to the universal ribosomal protein uS19 family.

Functionally, protein S19 forms a complex with S13 that binds strongly to the 16S ribosomal RNA. This is Small ribosomal subunit protein uS19 from Maricaulis maris (strain MCS10) (Caulobacter maris).